A 354-amino-acid polypeptide reads, in one-letter code: Serum paraoxonase/lactonase 3 (354 aa).

An N-linked (GlcNAc...) asparagine glycan is attached at N29. A disulfide bond links C42 and C352. Residues E53 and D54 each contribute to the Ca(2+) site. Catalysis depends on H114, which acts as the Proton acceptor. I116 contributes to the Ca(2+) binding site. Residue S165 is modified to Phosphoserine. Ca(2+) contacts are provided by N167, D168, N223, D268, and N269. N-linked (GlcNAc...) asparagine glycans are attached at residues N269 and N323.

Belongs to the paraoxonase family. Homodimer. It depends on Ca(2+) as a cofactor. In terms of processing, the signal sequence is not cleaved.

It localises to the secreted. The protein resides in the extracellular space. It catalyses the reaction a phenyl acetate + H2O = a phenol + acetate + H(+). It carries out the reaction An aryl dialkyl phosphate + H2O = dialkyl phosphate + an aryl alcohol.. The enzyme catalyses an N-acyl-L-homoserine lactone + H2O = an N-acyl-L-homoserine + H(+). In terms of biological role, has low activity towards the organophosphate paraxon and aromatic carboxylic acid esters. Rapidly hydrolyzes lactones such as statin prodrugs (e.g. lovastatin). Hydrolyzes aromatic lactones and 5- or 6-member ring lactones with aliphatic substituents but not simple lactones or those with polar substituents. In Homo sapiens (Human), this protein is Serum paraoxonase/lactonase 3 (PON3).